We begin with the raw amino-acid sequence, 216 residues long: Uracil phosphoribosyltransferase (216 aa).

Residues Arg-85, Arg-110, and 135–143 each bind 5-phospho-alpha-D-ribose 1-diphosphate; that span reads DPMVATGYS. Residues Ile-200 and 205–207 each bind uracil; that span reads GDA. Asp-206 is a 5-phospho-alpha-D-ribose 1-diphosphate binding site.

The protein belongs to the UPRTase family. Requires Mg(2+) as cofactor.

It carries out the reaction UMP + diphosphate = 5-phospho-alpha-D-ribose 1-diphosphate + uracil. The protein operates within pyrimidine metabolism; UMP biosynthesis via salvage pathway; UMP from uracil: step 1/1. With respect to regulation, allosterically activated by GTP. Functionally, catalyzes the conversion of uracil and 5-phospho-alpha-D-ribose 1-diphosphate (PRPP) to UMP and diphosphate. The sequence is that of Uracil phosphoribosyltransferase from Burkholderia mallei (strain NCTC 10247).